Reading from the N-terminus, the 365-residue chain is tRNA/tmRNA (uracil-C(5))-methyltransferase (365 aa).

5 residues coordinate S-adenosyl-L-methionine: glutamine 189, tyrosine 217, asparagine 222, glutamate 238, and aspartate 298. The Nucleophile role is filled by cysteine 323. Residue glutamate 357 is the Proton acceptor of the active site.

The protein belongs to the class I-like SAM-binding methyltransferase superfamily. RNA M5U methyltransferase family. TrmA subfamily.

The enzyme catalyses uridine(54) in tRNA + S-adenosyl-L-methionine = 5-methyluridine(54) in tRNA + S-adenosyl-L-homocysteine + H(+). It carries out the reaction uridine(341) in tmRNA + S-adenosyl-L-methionine = 5-methyluridine(341) in tmRNA + S-adenosyl-L-homocysteine + H(+). Dual-specificity methyltransferase that catalyzes the formation of 5-methyluridine at position 54 (m5U54) in all tRNAs, and that of position 341 (m5U341) in tmRNA (transfer-mRNA). This Shewanella baltica (strain OS185) protein is tRNA/tmRNA (uracil-C(5))-methyltransferase.